A 58-amino-acid chain; its full sequence is Bowman-Birk type wound-induced trypsin inhibitor (58 aa).

7 cysteine pairs are disulfide-bonded: Cys4–Cys57, Cys5–Cys20, Cys8–Cys53, Cys10–Cys18, Cys27–Cys34, Cys31–Cys46, and Cys36–Cys44.

This sequence belongs to the Bowman-Birk serine protease inhibitor family.

The sequence is that of Bowman-Birk type wound-induced trypsin inhibitor from Medicago sativa (Alfalfa).